We begin with the raw amino-acid sequence, 166 residues long: Sec-independent protein translocase protein TatB (166 aa).

A helical membrane pass occupies residues Phe-2–Gly-22. A disordered region spans residues Thr-110–Thr-166. Low complexity predominate over residues Ala-117 to Ala-129. Residues Val-132–Thr-142 show a composition bias toward polar residues.

It belongs to the TatB family. The Tat system comprises two distinct complexes: a TatABC complex, containing multiple copies of TatA, TatB and TatC subunits, and a separate TatA complex, containing only TatA subunits. Substrates initially bind to the TatABC complex, which probably triggers association of the separate TatA complex to form the active translocon.

It is found in the cell membrane. In terms of biological role, part of the twin-arginine translocation (Tat) system that transports large folded proteins containing a characteristic twin-arginine motif in their signal peptide across membranes. Together with TatC, TatB is part of a receptor directly interacting with Tat signal peptides. TatB may form an oligomeric binding site that transiently accommodates folded Tat precursor proteins before their translocation. The polypeptide is Sec-independent protein translocase protein TatB (Streptomyces griseus subsp. griseus (strain JCM 4626 / CBS 651.72 / NBRC 13350 / KCC S-0626 / ISP 5235)).